Reading from the N-terminus, the 100-residue chain is Cell division protein FtsB (100 aa).

The Cytoplasmic portion of the chain corresponds to 1-3 (MKW). Residues 4-21 (LAIILVVALLALQYRLWM) traverse the membrane as a helical segment. The Periplasmic segment spans residues 22 to 100 (GEGSIASVVS…TDKDTKKNKK (79 aa)). Residues 26–73 (IASVVSLNREIAKQKEENARLRERNRLLAAEVDALKQGKDAIEERARN) are a coiled coil.

This sequence belongs to the FtsB family. As to quaternary structure, part of a complex composed of FtsB, FtsL and FtsQ.

The protein resides in the cell inner membrane. In terms of biological role, essential cell division protein. May link together the upstream cell division proteins, which are predominantly cytoplasmic, with the downstream cell division proteins, which are predominantly periplasmic. This is Cell division protein FtsB from Saccharophagus degradans (strain 2-40 / ATCC 43961 / DSM 17024).